The chain runs to 711 residues: Ribosomal RNA large subunit methyltransferase K/L (711 aa).

Residues 43–154 (LGYRITLWSR…RGQITIGLNF (112 aa)) enclose the THUMP domain.

It belongs to the methyltransferase superfamily. RlmKL family.

Its subcellular location is the cytoplasm. The enzyme catalyses guanosine(2445) in 23S rRNA + S-adenosyl-L-methionine = N(2)-methylguanosine(2445) in 23S rRNA + S-adenosyl-L-homocysteine + H(+). The catalysed reaction is guanosine(2069) in 23S rRNA + S-adenosyl-L-methionine = N(2)-methylguanosine(2069) in 23S rRNA + S-adenosyl-L-homocysteine + H(+). Specifically methylates the guanine in position 2445 (m2G2445) and the guanine in position 2069 (m7G2069) of 23S rRNA. In Shewanella sediminis (strain HAW-EB3), this protein is Ribosomal RNA large subunit methyltransferase K/L.